A 449-amino-acid chain; its full sequence is Phosphoglucosamine mutase (449 aa).

Ser101 (phosphoserine intermediate) is an active-site residue. Residues Ser101, Asp243, Asp245, and Asp247 each coordinate Mg(2+). A Phosphoserine modification is found at Ser101.

Belongs to the phosphohexose mutase family. Mg(2+) serves as cofactor. Post-translationally, activated by phosphorylation.

The catalysed reaction is alpha-D-glucosamine 1-phosphate = D-glucosamine 6-phosphate. Functionally, catalyzes the conversion of glucosamine-6-phosphate to glucosamine-1-phosphate. The polypeptide is Phosphoglucosamine mutase (Syntrophobacter fumaroxidans (strain DSM 10017 / MPOB)).